Reading from the N-terminus, the 1086-residue chain is 1,2-beta-oligoglucan phosphorylase (1086 aa).

The active-site Proton donor is D741.

This sequence belongs to the glycosyl hydrolase 94 family. As to quaternary structure, monomer.

It catalyses the reaction [(1-&gt;2)-beta-D-glucosyl](n) + phosphate = [(1-&gt;2)-beta-D-glucosyl](n-1) + alpha-D-glucose 1-phosphate. Catalyzes the reversible phosphorolysis of beta-(1-&gt;2)-D-glucans. The minimum length of the substrate for the phosphorolytic reaction is 3 D-glucose units. This Listeria innocua serovar 6a (strain ATCC BAA-680 / CLIP 11262) protein is 1,2-beta-oligoglucan phosphorylase.